We begin with the raw amino-acid sequence, 344 residues long: N-acetyl-gamma-glutamyl-phosphate reductase (344 aa).

Residue Cys150 is part of the active site.

This sequence belongs to the NAGSA dehydrogenase family. Type 1 subfamily.

It is found in the cytoplasm. The enzyme catalyses N-acetyl-L-glutamate 5-semialdehyde + phosphate + NADP(+) = N-acetyl-L-glutamyl 5-phosphate + NADPH + H(+). Its pathway is amino-acid biosynthesis; L-arginine biosynthesis; N(2)-acetyl-L-ornithine from L-glutamate: step 3/4. In terms of biological role, catalyzes the NADPH-dependent reduction of N-acetyl-5-glutamyl phosphate to yield N-acetyl-L-glutamate 5-semialdehyde. The chain is N-acetyl-gamma-glutamyl-phosphate reductase from Pseudomonas putida (strain W619).